The following is a 119-amino-acid chain: Large ribosomal subunit protein uL18 (119 aa).

The protein belongs to the universal ribosomal protein uL18 family. As to quaternary structure, part of the 50S ribosomal subunit; part of the 5S rRNA/L5/L18/L25 subcomplex. Contacts the 5S and 23S rRNAs.

Its function is as follows. This is one of the proteins that bind and probably mediate the attachment of the 5S RNA into the large ribosomal subunit, where it forms part of the central protuberance. The sequence is that of Large ribosomal subunit protein uL18 from Clostridium botulinum (strain 657 / Type Ba4).